A 151-amino-acid polypeptide reads, in one-letter code: Large ribosomal subunit protein uL22 (151 aa).

The segment at 1-25 (MARINYSVKEDPETTSKAMGSELHI) is disordered.

It belongs to the universal ribosomal protein uL22 family. Part of the 50S ribosomal subunit.

Its function is as follows. This protein binds specifically to 23S rRNA. It makes multiple contacts with different domains of the 23S rRNA in the assembled 50S subunit and ribosome. In terms of biological role, the globular domain of the protein is located near the polypeptide exit tunnel on the outside of the subunit, while an extended beta-hairpin is found that lines the wall of the exit tunnel in the center of the 70S ribosome. This Methanosarcina barkeri (strain Fusaro / DSM 804) protein is Large ribosomal subunit protein uL22.